The following is a 457-amino-acid chain: Argininosuccinate lyase (457 aa).

It belongs to the lyase 1 family. Argininosuccinate lyase subfamily.

It is found in the cytoplasm. It carries out the reaction 2-(N(omega)-L-arginino)succinate = fumarate + L-arginine. It functions in the pathway amino-acid biosynthesis; L-arginine biosynthesis; L-arginine from L-ornithine and carbamoyl phosphate: step 3/3. This Klebsiella pneumoniae (strain 342) protein is Argininosuccinate lyase.